Consider the following 212-residue polypeptide: Phosphatidylserine decarboxylase proenzyme (212 aa).

The active-site Schiff-base intermediate with substrate; via pyruvic acid is serine 182. Residue serine 182 is modified to Pyruvic acid (Ser); by autocatalysis.

This sequence belongs to the phosphatidylserine decarboxylase family. PSD-A subfamily. As to quaternary structure, heterodimer of a large membrane-associated beta subunit and a small pyruvoyl-containing alpha subunit. Pyruvate is required as a cofactor. Is synthesized initially as an inactive proenzyme. Formation of the active enzyme involves a self-maturation process in which the active site pyruvoyl group is generated from an internal serine residue via an autocatalytic post-translational modification. Two non-identical subunits are generated from the proenzyme in this reaction, and the pyruvate is formed at the N-terminus of the alpha chain, which is derived from the carboxyl end of the proenzyme. The post-translation cleavage follows an unusual pathway, termed non-hydrolytic serinolysis, in which the side chain hydroxyl group of the serine supplies its oxygen atom to form the C-terminus of the beta chain, while the remainder of the serine residue undergoes an oxidative deamination to produce ammonia and the pyruvoyl prosthetic group on the alpha chain.

Its subcellular location is the cell membrane. It catalyses the reaction a 1,2-diacyl-sn-glycero-3-phospho-L-serine + H(+) = a 1,2-diacyl-sn-glycero-3-phosphoethanolamine + CO2. The protein operates within phospholipid metabolism; phosphatidylethanolamine biosynthesis; phosphatidylethanolamine from CDP-diacylglycerol: step 2/2. Its function is as follows. Catalyzes the formation of phosphatidylethanolamine (PtdEtn) from phosphatidylserine (PtdSer). The polypeptide is Phosphatidylserine decarboxylase proenzyme (Paraburkholderia phymatum (strain DSM 17167 / CIP 108236 / LMG 21445 / STM815) (Burkholderia phymatum)).